The primary structure comprises 182 residues: Peptide deformylase (182 aa).

2 residues coordinate Fe cation: Cys100 and His142. Residue Glu143 is part of the active site. Residue His146 participates in Fe cation binding.

Belongs to the polypeptide deformylase family. Requires Fe(2+) as cofactor.

It catalyses the reaction N-terminal N-formyl-L-methionyl-[peptide] + H2O = N-terminal L-methionyl-[peptide] + formate. Functionally, removes the formyl group from the N-terminal Met of newly synthesized proteins. Requires at least a dipeptide for an efficient rate of reaction. N-terminal L-methionine is a prerequisite for activity but the enzyme has broad specificity at other positions. In Bartonella bacilliformis (strain ATCC 35685 / KC583 / Herrer 020/F12,63), this protein is Peptide deformylase.